We begin with the raw amino-acid sequence, 192 residues long: MRRINERLDEILPKITDASFRENKGLGNEIGFYIFDYDPKYEMLVREHIVYMQERLKNDSSLHIREFDLYEVMLEILEEKGYLQKNIDMEQKKGSDFILNATRKALRLTSNNDLVVQYITDRVQPNDIVFLTGVGKVFPIIRSHTILNNLHKAVDNVPLVMFFPGTYDGLELVLFGEIKDDNYYRAFQLIDK.

Belongs to the BrxB family.

In terms of biological role, BREX systems (bacteriophage exclusion) provide immunity against bacteriophage. Part of a type 1 BREX system. This system allows phage adsorption but prevents phage DNA replication, without degradation of the phage DNA. Methylation of bacterial DNA by PglX probably guides self/non-self discrimination. When the brxA-brxB-brxC-pglX and pglZ-brxL operons are transformed into a susceptible B.subtilis strain (BEST7003) they confer resistance to bacteriophages SPbeta, SP16, Zeta, phi3T and SP02 and partial protection to phages SP01 and SP82G (these include lytic and temperate phage). They do not protect against phages phi105, rho10 or rho14. Additionally confers a very slight reduction in efficiency of plasmid transformation. This is BREX protein BrxB from Bacillus cereus (strain H3081.97).